The chain runs to 805 residues: Leucine--tRNA ligase (805 aa).

Positions 40–51 (PYPSGQGLHVGH) match the 'HIGH' region motif. Residues 577–581 (KMSKS) carry the 'KMSKS' region motif. Lys-580 lines the ATP pocket.

The protein belongs to the class-I aminoacyl-tRNA synthetase family.

It localises to the cytoplasm. The enzyme catalyses tRNA(Leu) + L-leucine + ATP = L-leucyl-tRNA(Leu) + AMP + diphosphate. In Pediococcus pentosaceus (strain ATCC 25745 / CCUG 21536 / LMG 10740 / 183-1w), this protein is Leucine--tRNA ligase.